Consider the following 238-residue polypeptide: Fmr1 neighbor protein (238 aa).

Positions 1–30 (MPSDRRPSQRRNRSKSRDYRGARSKVTRAD) are disordered. Topologically, residues 1–79 (MPSDRRPSQR…CLQYLWARRH (79 aa)) are cytoplasmic. A compositionally biased stretch (basic and acidic residues) spans 15-30 (KSRDYRGARSKVTRAD). The chain crosses the membrane as a helical span at residues 80 to 100 (LGLLLLLFWTLVILFRPVNTA). Over 101 to 178 (KLPILAEAAE…VRDKPTQVLR (78 aa)) the chain is Extracellular. In terms of domain architecture, P-type spans 118–176 (MLDFFFPTACIIRDNQVVVACNNQPYLSESECLKSKCCSSTSGTIIKCYAPVRDKPTQV). The chain crosses the membrane as a helical span at residues 179-199 (VFGLAAISILVLGFLPMCCCS). At 200-238 (MCWRRKRMNRMLKVLKKQKSKGKKPKGRKASEERALLSH) the chain is on the cytoplasmic side. The span at 214–227 (LKKQKSKGKKPKGR) shows a compositional bias: basic residues. Residues 214 to 238 (LKKQKSKGKKPKGRKASEERALLSH) are disordered. Over residues 228-238 (KASEERALLSH) the composition is skewed to basic and acidic residues.

The protein localises to the membrane. The protein is Fmr1 neighbor protein of Mus musculus (Mouse).